Consider the following 578-residue polypeptide: Proteasome-associated ATPase (578 aa).

Residues 8 to 84 (TAAELRNQVR…LKEEVDRLAQ (77 aa)) adopt a coiled-coil conformation. An ATP-binding site is contributed by 267-272 (GCGKTL). Positions 577-578 (YL) are docks into pockets in the proteasome alpha-ring.

This sequence belongs to the AAA ATPase family. As to quaternary structure, homohexamer. Assembles into a hexameric ring structure that caps the 20S proteasome core. Strongly interacts with the prokaryotic ubiquitin-like protein Pup through a hydrophobic interface; the interacting region of ARC lies in its N-terminal coiled-coil domain. There is one Pup binding site per ARC hexamer ring. Upon ATP-binding, the C-terminus of ARC interacts with the alpha-rings of the proteasome core, possibly by binding to the intersubunit pockets.

It functions in the pathway protein degradation; proteasomal Pup-dependent pathway. Its function is as follows. ATPase which is responsible for recognizing, binding, unfolding and translocation of pupylated proteins into the bacterial 20S proteasome core particle. May be essential for opening the gate of the 20S proteasome via an interaction with its C-terminus, thereby allowing substrate entry and access to the site of proteolysis. Thus, the C-termini of the proteasomal ATPase may function like a 'key in a lock' to induce gate opening and therefore regulate proteolysis. The polypeptide is Proteasome-associated ATPase (Kribbella flavida (strain DSM 17836 / JCM 10339 / NBRC 14399)).